The sequence spans 447 residues: MARLFGTDGVRGIANYDLTPQLAFELGRAGAYVLTHGTHRPKVVVGKDSRISGDMLECALTAGLTSVGAEVISVGIIPTPAVAYLTRLYQADAGVMISASHNPVEYNGIKFFDKDGYKLPDEVEDRIENIIKEKIELPSPIGTGIGTRKEYTNSHRDYIEFLKSTIDGDLKEMKIVIDCAYGASSTIAPILFKELGAEVILHGAEPIGEKINVNCGSTHPEKLQQLVIENGADIGLAFDGDADRLIAVDEKGNVVDGDHIMAICAIDLKKKGRLKNNTVVATVMSNIGFEIALKEQGINLIRTKVGDRYVLEEMTKGGYSIGGEQSGHIIFLDDNTTGDGEITALKLCSISKESGKKLSELAACMITYPQVLINAKVKNELKNAYLEDEEIKREIENLEREMRGEGRVLIRPSGTEPLVRVMVEGKDYDKISQMAKELAELIERKLN.

The Phosphoserine intermediate role is filled by Ser-100. Positions 100, 239, 241, and 243 each coordinate Mg(2+). At Ser-100 the chain carries Phosphoserine.

This sequence belongs to the phosphohexose mutase family. The cofactor is Mg(2+). Activated by phosphorylation.

The enzyme catalyses alpha-D-glucosamine 1-phosphate = D-glucosamine 6-phosphate. Functionally, catalyzes the conversion of glucosamine-6-phosphate to glucosamine-1-phosphate. The chain is Phosphoglucosamine mutase from Thermoanaerobacter pseudethanolicus (strain ATCC 33223 / 39E) (Clostridium thermohydrosulfuricum).